We begin with the raw amino-acid sequence, 347 residues long: UDP-3-O-acylglucosamine N-acyltransferase 1 (347 aa).

His-246 serves as the catalytic Proton acceptor.

This sequence belongs to the transferase hexapeptide repeat family. LpxD subfamily. As to quaternary structure, homotrimer.

The enzyme catalyses a UDP-3-O-[(3R)-3-hydroxyacyl]-alpha-D-glucosamine + a (3R)-hydroxyacyl-[ACP] = a UDP-2-N,3-O-bis[(3R)-3-hydroxyacyl]-alpha-D-glucosamine + holo-[ACP] + H(+). The protein operates within bacterial outer membrane biogenesis; LPS lipid A biosynthesis. Catalyzes the N-acylation of UDP-3-O-acylglucosamine using 3-hydroxyacyl-ACP as the acyl donor. Is involved in the biosynthesis of lipid A, a phosphorylated glycolipid that anchors the lipopolysaccharide to the outer membrane of the cell. This is UDP-3-O-acylglucosamine N-acyltransferase 1 from Francisella tularensis subsp. tularensis (strain SCHU S4 / Schu 4).